The primary structure comprises 70 residues: NAD(P)H-quinone oxidoreductase subunit O (70 aa).

Belongs to the complex I NdhO subunit family. In terms of assembly, NDH-1 can be composed of about 15 different subunits; different subcomplexes with different compositions have been identified which probably have different functions.

It localises to the cellular thylakoid membrane. It carries out the reaction a plastoquinone + NADH + (n+1) H(+)(in) = a plastoquinol + NAD(+) + n H(+)(out). The enzyme catalyses a plastoquinone + NADPH + (n+1) H(+)(in) = a plastoquinol + NADP(+) + n H(+)(out). Functionally, NDH-1 shuttles electrons from an unknown electron donor, via FMN and iron-sulfur (Fe-S) centers, to quinones in the respiratory and/or the photosynthetic chain. The immediate electron acceptor for the enzyme in this species is believed to be plastoquinone. Couples the redox reaction to proton translocation, and thus conserves the redox energy in a proton gradient. Cyanobacterial NDH-1 also plays a role in inorganic carbon-concentration. The protein is NAD(P)H-quinone oxidoreductase subunit O of Trichormus variabilis (strain ATCC 29413 / PCC 7937) (Anabaena variabilis).